The primary structure comprises 356 residues: Peptide chain release factor 1 (356 aa).

Gln233 is modified (N5-methylglutamine).

This sequence belongs to the prokaryotic/mitochondrial release factor family. Methylated by PrmC. Methylation increases the termination efficiency of RF1.

It localises to the cytoplasm. In terms of biological role, peptide chain release factor 1 directs the termination of translation in response to the peptide chain termination codons UAG and UAA. The chain is Peptide chain release factor 1 (prfA) from Bacillus subtilis (strain 168).